The sequence spans 210 residues: Tumor protein D53 homolog (210 aa).

Positions 22–73 form a coiled coil; that stretch reads VTDVDFTSMISEEEKEELKAELAKLEDEISTLRQVLAAKEKHLIEIKQKLGM. Polar residues predominate over residues 185-197; that stretch reads SSTAHASAQSSLA. A disordered region spans residues 185 to 210; the sequence is SSTAHASAQSSLAGTRLPESEEELQC.

The protein belongs to the TPD52 family. Forms a homodimer or heterodimer with other members of the family.

This chain is Tumor protein D53 homolog (TPD52L1), found in Gallus gallus (Chicken).